Reading from the N-terminus, the 681-residue chain is DNA-directed RNA polymerase subunit beta' (681 aa).

Positions 69, 71, 87, and 90 each coordinate Zn(2+). Positions 489, 491, and 493 each coordinate Mg(2+).

This sequence belongs to the RNA polymerase beta' chain family. RpoC1 subfamily. In terms of assembly, in plastids the minimal PEP RNA polymerase catalytic core is composed of four subunits: alpha, beta, beta', and beta''. When a (nuclear-encoded) sigma factor is associated with the core the holoenzyme is formed, which can initiate transcription. Mg(2+) is required as a cofactor. It depends on Zn(2+) as a cofactor.

It is found in the plastid. Its subcellular location is the chloroplast. It catalyses the reaction RNA(n) + a ribonucleoside 5'-triphosphate = RNA(n+1) + diphosphate. Functionally, DNA-dependent RNA polymerase catalyzes the transcription of DNA into RNA using the four ribonucleoside triphosphates as substrates. The sequence is that of DNA-directed RNA polymerase subunit beta' from Nicotiana sylvestris (Wood tobacco).